The chain runs to 422 residues: UDP-N-acetylglucosamine 1-carboxyvinyltransferase (422 aa).

A phosphoenolpyruvate-binding site is contributed by 22–23 (KN). Arginine 92 lines the UDP-N-acetyl-alpha-D-glucosamine pocket. The Proton donor role is filled by cysteine 116. 2-(S-cysteinyl)pyruvic acid O-phosphothioketal is present on cysteine 116. UDP-N-acetyl-alpha-D-glucosamine contacts are provided by residues 121–125 (RPVDQ), aspartate 305, and isoleucine 327.

This sequence belongs to the EPSP synthase family. MurA subfamily.

The protein resides in the cytoplasm. The enzyme catalyses phosphoenolpyruvate + UDP-N-acetyl-alpha-D-glucosamine = UDP-N-acetyl-3-O-(1-carboxyvinyl)-alpha-D-glucosamine + phosphate. The protein operates within cell wall biogenesis; peptidoglycan biosynthesis. Functionally, cell wall formation. Adds enolpyruvyl to UDP-N-acetylglucosamine. This is UDP-N-acetylglucosamine 1-carboxyvinyltransferase from Sorangium cellulosum (strain So ce56) (Polyangium cellulosum (strain So ce56)).